The primary structure comprises 414 residues: Cytochrome b (414 aa).

The next 2 membrane-spanning stretches (helical) occupy residues 40 to 60 and 84 to 104; these read FFGSLAILTLVIQIVTGVWLA and GWLIRYMHSTGASMFFIVIYL. His91 and His105 together coordinate heme b. 8 helical membrane passes run 121 to 141, 154 to 174, 188 to 208, 252 to 272, 294 to 314, 317 to 337, 351 to 371, and 378 to 398; these read LLWMIGVVIYLVMMATAFFGY, QVIVNLFAAVPVVGEDLSVWV, FFAFHFLLPFLLAGLVFLHIV, LMGVVVFLAIFGYVMFFNPTM, IAPVWYFTPFYAMLRAVPPMY, QFPGVVVMFAAILILFVLPWL, IFKWATGIFVVSFVALAWLGI, and YTLLSQIFTVLYFAYFLLMPI. 2 residues coordinate heme b: His192 and His206.

The protein belongs to the cytochrome b family. As to quaternary structure, the main subunits of complex b-c1 are: cytochrome b, cytochrome c1 and the Rieske protein. Heme b is required as a cofactor.

It is found in the cell membrane. Functionally, component of the ubiquinol-cytochrome c reductase complex (complex III or cytochrome b-c1 complex), which is a respiratory chain that generates an electrochemical potential coupled to ATP synthesis. The protein is Cytochrome b (petB) of Allochromatium vinosum (strain ATCC 17899 / DSM 180 / NBRC 103801 / NCIMB 10441 / D) (Chromatium vinosum).